Reading from the N-terminus, the 647-residue chain is ATP-dependent zinc metalloprotease FtsH (647 aa).

The segment at 1–33 (MARKSDEDTNPMDKFMDRLRGSPGDGGPGRPDP) is disordered. Residues 1–39 (MARKSDEDTNPMDKFMDRLRGSPGDGGPGRPDPSQRKVH) are Cytoplasmic-facing. The chain crosses the membrane as a helical span at residues 40–60 (FSIWYFILALLLIVWMQTYMG). Residues 61–134 (EQQSEKISYS…RFSGDVQNPW (74 aa)) are Periplasmic-facing. Residues 135–155 (LGLITWWLLPFAIMIFFWSFL) form a helical membrane-spanning segment. The Cytoplasmic segment spans residues 156–647 (MRRMGGGPQG…DPVQVEGGAA (492 aa)). Residue 227 to 234 (GAPGTGKT) coordinates ATP. His449 contacts Zn(2+). Glu450 is a catalytic residue. Zn(2+) is bound by residues His453 and Asp526.

It in the central section; belongs to the AAA ATPase family. In the C-terminal section; belongs to the peptidase M41 family. In terms of assembly, homohexamer. Requires Zn(2+) as cofactor.

The protein resides in the cell inner membrane. Its function is as follows. Acts as a processive, ATP-dependent zinc metallopeptidase for both cytoplasmic and membrane proteins. Plays a role in the quality control of integral membrane proteins. This chain is ATP-dependent zinc metalloprotease FtsH, found in Syntrophobacter fumaroxidans (strain DSM 10017 / MPOB).